A 161-amino-acid chain; its full sequence is Cell division control protein 31 (161 aa).

4 EF-hand domains span residues 20–55 (EQKQ…LGFE), 56–91 (LPKR…KILK), 93–128 (DPLD…LGET), and 129–161 (LTDE…CTDS). Residues D33, N35, D37, and E44 each coordinate Ca(2+). T130 is subject to Phosphothreonine. Ca(2+)-binding residues include D142, D144, D146, E148, and E153.

The protein belongs to the centrin family. As to quaternary structure, component of the spindle pole body (SPB), acting as the connector of microtubule arrays in the cytoplasm and the nucleoplasm, is involved in nuclear positioning before chromosome segregation, SPB separation, spindle formation, chromosome segregation, nuclear migration into the bud, nuclear reorientation after cytokinesis and nuclear fusion during conjugation. The SPB half-bridge, which is tightly associated with the cytoplasmic side of the nuclear envelope and the SPB, is playing a key role as the starting structure for and in the initiation of SPB duplication in G1. At the SPB half-bridge CDC31 interacts with KAR1, MPS3 and SFI1. Interacts with KIC1. Interacts with VPS13. Associates with nuclear pore complexes (NPCs).

Its subcellular location is the nucleus envelope. The protein resides in the cytoplasm. It localises to the cytoskeleton. The protein localises to the microtubule organizing center. It is found in the spindle pole body. Its function is as follows. Functions as a component of the spindle pole body (SPB) half-bridge. At the SPB, it is recruited by KAR1 and MPS3 to the SPB half-bridge and involved in the initial steps of SPB duplication. Also involved in connection with the protein kinase KIC1 in the maintenance of cell morphology and integrity. May play a role in vesicle-mediated transport, in a VPS13-dependent manner. This is Cell division control protein 31 (CDC31) from Saccharomyces cerevisiae (strain ATCC 204508 / S288c) (Baker's yeast).